Reading from the N-terminus, the 884-residue chain is Protein P (884 aa).

The segment at M1–Q184 is terminal protein domain (TP). The interval L185 to L387 is spacer. Disordered stretches follow at residues P218–T241 and R299–S345. 2 stretches are compositionally biased toward polar residues: residues V222–T241 and Y323–Y332. The interval D388–Q729 is polymerase/reverse transcriptase domain (RT). The Reverse transcriptase domain maps to D398–I639. Positions 470, 590, and 591 each coordinate Mg(2+).

It belongs to the hepadnaviridae P protein family.

The catalysed reaction is DNA(n) + a 2'-deoxyribonucleoside 5'-triphosphate = DNA(n+1) + diphosphate. The enzyme catalyses Endonucleolytic cleavage to 5'-phosphomonoester.. With respect to regulation, activated by host HSP70 and HSP40 in vitro to be able to bind the epsilon loop of the pgRNA. Because deletion of the RNase H region renders the protein partly chaperone-independent, the chaperones may be needed indirectly to relieve occlusion of the RNA-binding site by this domain. Inhibited by several reverse-transcriptase inhibitors: Lamivudine, Adefovir and Entecavir. Functionally, multifunctional enzyme that converts the viral RNA genome into dsDNA in viral cytoplasmic capsids. This enzyme displays a DNA polymerase activity that can copy either DNA or RNA templates, and a ribonuclease H (RNase H) activity that cleaves the RNA strand of RNA-DNA heteroduplexes in a partially processive 3'- to 5'-endonucleasic mode. Neo-synthesized pregenomic RNA (pgRNA) are encapsidated together with the P protein, and reverse-transcribed inside the nucleocapsid. Initiation of reverse-transcription occurs first by binding the epsilon loop on the pgRNA genome, and is initiated by protein priming, thereby the 5'-end of (-)DNA is covalently linked to P protein. Partial (+)DNA is synthesized from the (-)DNA template and generates the relaxed circular DNA (RC-DNA) genome. After budding and infection, the RC-DNA migrates in the nucleus, and is converted into a plasmid-like covalently closed circular DNA (cccDNA). The activity of P protein does not seem to be necessary for cccDNA generation, and is presumably released from (+)DNA by host nuclear DNA repair machinery. In Marmota monax (Woodchuck), this protein is Protein P.